The primary structure comprises 147 residues: Probable WRKY transcription factor 45 (147 aa).

Positions 21–52 (TEFHGVDNSAQPTTSSEEKPRSKKKKKEREAR) are disordered. Residues 59–124 (SQVDILDDGY…YQGVHTHAVD (66 aa)) constitute a DNA-binding region (WRKY). Positions 90, 95, 119, and 121 each coordinate Zn(2+).

The protein belongs to the WRKY group I family.

It localises to the nucleus. Functionally, transcription factor. Interacts specifically with the W box (5'-(T)TGAC[CT]-3'), a frequently occurring elicitor-responsive cis-acting element. This Arabidopsis thaliana (Mouse-ear cress) protein is Probable WRKY transcription factor 45 (WRKY45).